A 315-amino-acid polypeptide reads, in one-letter code: Ninja-family protein 1 (315 aa).

Disordered stretches follow at residues 1–28 (MASRDFLGRFGGEKGAASDKAGGGAGEA), 68–142 (SLPG…AQEP), and 156–237 (DQGN…TGDL). Positions 99-108 (ERWRRREMQS) are enriched in basic and acidic residues. Residues 156 to 166 (DQGNPSSSMPE) show a composition bias toward polar residues. 2 stretches are compositionally biased toward low complexity: residues 184–197 (SSDNNNNASNQNKS) and 221–234 (LRTLRSLTMRTTST).

This sequence belongs to the Ninja family.

The protein localises to the nucleus. In Triticum aestivum (Wheat), this protein is Ninja-family protein 1 (AFP-A1).